The sequence spans 495 residues: PXA domain protein 1 (495 aa).

Residues 1–174 enclose the PXA domain; sequence MAKLSSLLNP…KFIIYLSKAI (174 aa). Helical transmembrane passes span 7 to 27 and 235 to 255; these read LLNP…YSGI and WFFF…FVAE. Composition is skewed to polar residues over residues 402–419 and 427–436; these read AVSS…QRSF and DSQTPSENSA. The segment at 402-436 is disordered; sequence AVSSPTKANTNKSHQRSFSIPKATKDSQTPSENSA. Residues 446 to 466 traverse the membrane as a helical segment; it reads AYSQIPVIPFFLPSDKLIMLV.

The protein resides in the endosome membrane. Its function is as follows. Required for required for normal vacuolar morphology and for vacuolar protein transport. Also required for endosome-to-Golgi protein transport. The chain is PXA domain protein 1 (pxa1) from Schizosaccharomyces pombe (strain 972 / ATCC 24843) (Fission yeast).